The following is a 259-amino-acid chain: Global transcriptional regulator CodY (259 aa).

The interval 1–155 (MNLLEKTRKI…GATVVGMEIL (155 aa)) is GAF domain. The segment at residues 203–222 (ASKIADRVGITRSVIVNALR) is a DNA-binding region (H-T-H motif). A Phosphoserine modification is found at Ser-215.

It belongs to the CodY family.

It is found in the cytoplasm. Its function is as follows. DNA-binding global transcriptional regulator which is involved in the adaptive response to starvation and acts by directly or indirectly controlling the expression of numerous genes in response to nutrient availability. During rapid exponential growth, CodY is highly active and represses genes whose products allow adaptation to nutrient depletion. This is Global transcriptional regulator CodY from Lysinibacillus sphaericus (strain C3-41).